The chain runs to 503 residues: METLETEKFFSDDKPLLKPISDHSEIKTKARRNAVVSVLIQPFQWLQMLSSRLNLSFVLGVVLVYGVNQGFSGSIFKVVTDYYWKDVQQVQPSVVQLYMGLYYIPWVMRPIWGLFTDVFPIKGYKRKPYFVVSGVLGLVSAIAIVVLGKLPAALALSCLLGVSAAMAIADVVIDACIATNSINIRSLAPDIQSLCMVCSSAGALVGYATSGVFVHQLGPQGALGVLAFSPATIVILGFFIYEKRSSTVPTQKTKKDTDGLGVAVKGMCKTVKYPEVWKPSLYMFISLALNISTHEGHFYWYTDPTAGPAFSQEFVGIIYAVGALASMFGVLIYHKKLKGYSFRNILFFAQLLYVFSGMLDLVFIKRWNLTLGIPDSLFVITEESFTKMISKIRWIPMVVLSTRLCPLGIEGTFFAFLMCIDSFGQLASKWGGGFVLHAFGVTRHDFGNLWLVILIRNILRLVTVCFVFLVPDSDHLDDLVPSDVLPKKQSEDDDDDDIKLLLL.

A run of 12 helical transmembrane segments spans residues 56 to 76 (SFVL…GSIF), 101 to 121 (LYYI…VFPI), 128 to 148 (PYFV…VVLG), 153 to 173 (ALAL…DVVI), 194 to 214 (LCMV…GVFV), 221 to 241 (GALG…FFIY), 281 to 301 (LYMF…FYWY), 314 to 334 (FVGI…LIYH), 344 to 364 (NILF…LVFI), 369 to 389 (LTLG…TKMI), 404 to 424 (LCPL…DSFG), and 450 to 470 (WLVI…VFLV).

This sequence belongs to the major facilitator superfamily. Folate-biopterin transporter (TC 2.A.71) family.

It is found in the membrane. In terms of biological role, could mediate folate transport. The protein is Probable folate-biopterin transporter 6 of Arabidopsis thaliana (Mouse-ear cress).